Here is a 372-residue protein sequence, read N- to C-terminus: Glutamate 5-kinase (372 aa).

Position 14 (Lys14) interacts with ATP. Substrate contacts are provided by Ser54, Asp141, and Asn153. Thr173 to Asp174 contacts ATP. The PUA domain maps to Arg280–Met358.

Belongs to the glutamate 5-kinase family.

It is found in the cytoplasm. It carries out the reaction L-glutamate + ATP = L-glutamyl 5-phosphate + ADP. It participates in amino-acid biosynthesis; L-proline biosynthesis; L-glutamate 5-semialdehyde from L-glutamate: step 1/2. Functionally, catalyzes the transfer of a phosphate group to glutamate to form L-glutamate 5-phosphate. This Burkholderia orbicola (strain MC0-3) protein is Glutamate 5-kinase.